A 1143-amino-acid polypeptide reads, in one-letter code: Disease resistance protein Piks-1 (1143 aa).

The interval 1–190 (MEAAAMAVTA…PLRIMGGEMQ (190 aa)) is structured coiled coil (CC) domain. Positions 189-258 (MQKIVFKIPM…KVGPAMFLEV (70 aa)) constitute an HMA domain. The interval 191-264 (KIVFKIPMVD…FLEVSQAKED (74 aa)) is HMA-like domain. One can recognise an NB-ARC domain in the interval 282–570 (HEVKTICILG…WIAEGFVSEE (289 aa)). LRR repeat units lie at residues 681–706 (FKRLRVLDLEDNKDIQDSHLQGICEQ), 708–731 (SLRVRYLGLKGTRIRKLPQEMRKL), 732–754 (KHLEILYVGSTRISELPQEIGEL), 756–777 (HLRILDVRNTDITELPLQIREL), 778–800 (QHLHTLDVRNTPISELPPQVGKL), 802–823 (NLKIMCVRSTGVRELPKEIGEL), 824–848 (NHLQTLDVRNTRVRELPWQAGQISQ), 945–968 (MPNLQTLVLRFEALPRQPITINGT), 979–1002 (DSRVPRIAFHEDAMPNLKLLEFKF), and 1004–1027 (AGPASNDAIGITNLKSLQKVVFRC).

It belongs to the disease resistance NB-LRR family. As to quaternary structure, interacts with AVR-Pik through its N-terminal part containing the HMA-like domain.

Its function is as follows. Disease resistance (R) protein that specifically recognizes the AVR-Pik effector avirulence protein from M.oryzae. Resistance proteins guard the plant against pathogens that contain an appropriate avirulence protein via an indirect interaction with this avirulence protein. That triggers a defense system including the hypersensitive response, which restricts the pathogen growth. In Oryza sativa subsp. japonica (Rice), this protein is Disease resistance protein Piks-1.